Reading from the N-terminus, the 267-residue chain is MSTAQLVVQHLPYLRRYARALTGSQVAGDAYVAATLETLVNEPETLGRSTNVKADLFRVFTRIWNSLSVNGHSDQVQHDLPAEVRLGQITPLPRQAFLLSCLEGFSEEDAGVILDVDVSKVRDLVDEAGRELAADMATEILIIEDEPLIAMDLEALVEGLGHNVIGVARTRTEAVKIASESKRPGLILADIQLADGSSGLDAVNDLLKTFEVPVIFITAYPERFLTGERPEPAFLIAKPFQPANVSAVISQALFFQQSARRREAHNA.

Positions 139–253 (EILIIEDEPL…NVSAVISQAL (115 aa)) constitute a Response regulatory domain. D190 bears the 4-aspartylphosphate mark.

Its function is as follows. Key regulator for adaptation to epiphytic life (leaf colonizing) of the bacterium. Positively regulates several genes including katE, sodA, hsp20, dps and gloA. However, it is not known whether this regulation is direct or indirect. Also induces several dehydrogenases. In Methylorubrum extorquens (strain ATCC 14718 / DSM 1338 / JCM 2805 / NCIMB 9133 / AM1) (Methylobacterium extorquens), this protein is Phyllosphere-induced regulator PhyR (phyR).